Consider the following 504-residue polypeptide: L-carnitine/gamma-butyrobetaine antiporter (504 aa).

The next 12 helical transmembrane spans lie at 10–30 (MEPK…WLTV), 51–71 (WGWA…WLVF), 92–112 (IFMM…SIEI), 143–163 (GPLP…FFFV), 195–215 (FYLV…TPLV), 231–251 (LDAI…ACGL), 263–283 (SYLS…SFIM), 316–336 (WSVF…IFLA), 347–367 (LCFG…TVLG), 398–418 (WAAL…CFIA), 446–466 (LLVR…LLAL), and 475–495 (AIIA…LSFI).

The protein belongs to the BCCT transporter (TC 2.A.15) family. CaiT subfamily. Homotrimer.

The protein resides in the cell inner membrane. It carries out the reaction 4-(trimethylamino)butanoate(in) + (R)-carnitine(out) = 4-(trimethylamino)butanoate(out) + (R)-carnitine(in). Its pathway is amine and polyamine metabolism; carnitine metabolism. Functionally, catalyzes the exchange of L-carnitine for gamma-butyrobetaine. This chain is L-carnitine/gamma-butyrobetaine antiporter, found in Shigella dysenteriae serotype 1 (strain Sd197).